A 145-amino-acid polypeptide reads, in one-letter code: Small ribosomal subunit protein uS15 (145 aa).

The protein belongs to the universal ribosomal protein uS15 family. As to quaternary structure, part of the 30S ribosomal subunit.

This Thermoplasma acidophilum (strain ATCC 25905 / DSM 1728 / JCM 9062 / NBRC 15155 / AMRC-C165) protein is Small ribosomal subunit protein uS15.